Here is a 257-residue protein sequence, read N- to C-terminus: Phosphonates import ATP-binding protein PhnC (257 aa).

An ABC transporter domain is found at 2–246; the sequence is IEFRNVSKVY…KFAEIYGDVA (245 aa). 35-42 is a binding site for ATP; it reads GLSGAGKS.

It belongs to the ABC transporter superfamily. Phosphonates importer (TC 3.A.1.9.1) family. In terms of assembly, the complex is composed of two ATP-binding proteins (PhnC), two transmembrane proteins (PhnE) and a solute-binding protein (PhnD).

The protein resides in the cell membrane. The catalysed reaction is phosphonate(out) + ATP + H2O = phosphonate(in) + ADP + phosphate + H(+). Functionally, part of the ABC transporter complex PhnCDE involved in phosphonates import. Responsible for energy coupling to the transport system. This chain is Phosphonates import ATP-binding protein PhnC, found in Bacillus cereus (strain ATCC 14579 / DSM 31 / CCUG 7414 / JCM 2152 / NBRC 15305 / NCIMB 9373 / NCTC 2599 / NRRL B-3711).